The following is a 382-amino-acid chain: Pyruvate dehydrogenase E1 component subunit beta, mitochondrial (382 aa).

Residues 1–46 (MSRFLRPAFRLATTATRASTIRPTPSSLITKAAAVPTTRLLQKRSY) constitute a mitochondrion transit peptide. Glu-112 serves as a coordination point for thiamine diphosphate. Ile-165, Ala-213, Ile-214, Asp-216, and Asn-218 together coordinate K(+).

In terms of assembly, eukaryotic pyruvate dehydrogenase (PDH) complexes are organized as a core consisting of the oligomeric dihydrolipoamide acetyl-transferase (E2), around which are arranged multiple copies of pyruvate dehydrogenase (E1), dihydrolipoamide dehydrogenase (E3) and protein X (E3BP) bound by non-covalent bonds. The Chaetomium thermophilum PDH complex contains 60 E2 units, 12 E3BP units, about 20 E1 units, and 12 or more E3 units. The units are organized in 1 E2 60-mer, 4 E3BP trimers, about 20 E1 tetramers, and a maximum of 12 E3 dimers. Pyruvate dehydrogenase (E1) is active as a tetramer of 2 alpha and 2 beta subunits. The E3BP trimers are bound inside the icosahedral core with tetrahedral symmetry. The cofactor is thiamine diphosphate.

The protein localises to the mitochondrion. It catalyses the reaction N(6)-[(R)-lipoyl]-L-lysyl-[protein] + pyruvate + H(+) = N(6)-[(R)-S(8)-acetyldihydrolipoyl]-L-lysyl-[protein] + CO2. Its function is as follows. The 10-megadalton pyruvate dehydrogenase complex contains multiple copies of three enzymatic components: pyruvate dehydrogenase (E1), dihydrolipoamide acetyltransferase (E2) and lipoamide dehydrogenase (E3) and catalyzes the overall oxidative decarboxylation of pyruvate to form acetyl-CoA and CO(2). Within the complex, pyruvate and thiamine pyrophosphate (TPP or vitamin B1) are bound by pyruvate dehydrogenase E1 subunits alpha and beta and pyruvate is decarboxylated leading to the 2-carbon hydrohyethyl bound to TPP. The E2 component contains covalently-bound lipoyl cofactors and transfers the hydroxyethyl group from TPP to an oxidized form of covalently bound lipoamide, and the resulting acetyl group is then transferred to free coenzyme A to form acetyl-CoA and reduced dihydrolipoamide-E2. Finally, the flavoprotein dihydrolipoamide dehydrogenase (E3) re-oxidizes the lipoyl group of dihydrolipoamide-E2 to form lipoamide-E2 and NADH. A fourth subunit, E3BP, is responsible for tethering E3 in proximity to the core, forming the entire metabolon. This chain is Pyruvate dehydrogenase E1 component subunit beta, mitochondrial, found in Chaetomium thermophilum (strain DSM 1495 / CBS 144.50 / IMI 039719) (Thermochaetoides thermophila).